A 431-amino-acid chain; its full sequence is Glucose-1-phosphate adenylyltransferase (431 aa).

Residue K39 coordinates beta-D-fructose 1,6-bisphosphate. AMP is bound by residues R40, H46, and R52. Y114 is an alpha-D-glucose 1-phosphate binding site. R130 is a binding site for AMP. Alpha-D-glucose 1-phosphate-binding positions include G179, 194–195 (EK), and S212. R386 contacts AMP. Residues 419–423 (REMLR) and 429–431 (QER) contribute to the beta-D-fructose 1,6-bisphosphate site.

The protein belongs to the bacterial/plant glucose-1-phosphate adenylyltransferase family. As to quaternary structure, homotetramer.

The enzyme catalyses alpha-D-glucose 1-phosphate + ATP + H(+) = ADP-alpha-D-glucose + diphosphate. It participates in glycan biosynthesis; glycogen biosynthesis. With respect to regulation, allosterically activated by fructose-1,6-bisphosphate (F16BP) and inhibited by AMP. In terms of biological role, involved in the biosynthesis of ADP-glucose, a building block required for the elongation reactions to produce glycogen. Catalyzes the reaction between ATP and alpha-D-glucose 1-phosphate (G1P) to produce pyrophosphate and ADP-Glc. In Enterobacter sp. (strain 638), this protein is Glucose-1-phosphate adenylyltransferase.